Reading from the N-terminus, the 163-residue chain is Putative H/ACA ribonucleoprotein complex subunit 2-like protein (163 aa).

The disordered stretch occupies residues 1 to 27 (MGKRNLDETMNESTVSEANGDATAPTT).

Belongs to the eukaryotic ribosomal protein eL8 family. Component of the small nucleolar ribonucleoprotein particle containing H/ACA-type snoRNAs (H/ACA snoRNPs).

The protein resides in the nucleus. It is found in the nucleolus. In terms of biological role, required for ribosome biogenesis. Part of a complex which catalyzes pseudouridylation of rRNA. This involves the isomerization of uridine such that the ribose is subsequently attached to C5, instead of the normal N1. Pseudouridine ('psi') residues may serve to stabilize the conformation of rRNAs. This is Putative H/ACA ribonucleoprotein complex subunit 2-like protein from Caenorhabditis elegans.